Here is a 284-residue protein sequence, read N- to C-terminus: Bifunctional protein FolD 1 (284 aa).

Residues 166 to 168 (GAS) and Ile-232 contribute to the NADP(+) site.

It belongs to the tetrahydrofolate dehydrogenase/cyclohydrolase family. In terms of assembly, homodimer.

The catalysed reaction is (6R)-5,10-methylene-5,6,7,8-tetrahydrofolate + NADP(+) = (6R)-5,10-methenyltetrahydrofolate + NADPH. The enzyme catalyses (6R)-5,10-methenyltetrahydrofolate + H2O = (6R)-10-formyltetrahydrofolate + H(+). It functions in the pathway one-carbon metabolism; tetrahydrofolate interconversion. In terms of biological role, catalyzes the oxidation of 5,10-methylenetetrahydrofolate to 5,10-methenyltetrahydrofolate and then the hydrolysis of 5,10-methenyltetrahydrofolate to 10-formyltetrahydrofolate. This Pseudomonas syringae pv. syringae (strain B728a) protein is Bifunctional protein FolD 1.